The primary structure comprises 332 residues: Glycerol-3-phosphate dehydrogenase [NAD(P)+] (332 aa).

NADPH-binding residues include S11, W12, R32, R33, and K106. Sn-glycerol 3-phosphate contacts are provided by K106 and G136. An NADPH-binding site is contributed by A140. Sn-glycerol 3-phosphate is bound by residues K191, D244, S254, R255, and N256. The active-site Proton acceptor is the K191. R255 lines the NADPH pocket. The NADPH site is built by V280 and E282.

The protein belongs to the NAD-dependent glycerol-3-phosphate dehydrogenase family.

The protein localises to the cytoplasm. The enzyme catalyses sn-glycerol 3-phosphate + NAD(+) = dihydroxyacetone phosphate + NADH + H(+). The catalysed reaction is sn-glycerol 3-phosphate + NADP(+) = dihydroxyacetone phosphate + NADPH + H(+). It functions in the pathway membrane lipid metabolism; glycerophospholipid metabolism. Functionally, catalyzes the reduction of the glycolytic intermediate dihydroxyacetone phosphate (DHAP) to sn-glycerol 3-phosphate (G3P), the key precursor for phospholipid synthesis. This chain is Glycerol-3-phosphate dehydrogenase [NAD(P)+], found in Corynebacterium kroppenstedtii (strain DSM 44385 / JCM 11950 / CIP 105744 / CCUG 35717).